Consider the following 277-residue polypeptide: Formamidopyrimidine-DNA glycosylase (277 aa).

Pro2 serves as the catalytic Schiff-base intermediate with DNA. The active-site Proton donor is Glu3. The active-site Proton donor; for beta-elimination activity is the Lys59. DNA is bound by residues His96, Arg115, and Arg158. The FPG-type zinc-finger motif lies at 243-277; sequence WVYGRGGNPCRRCGGEILREKRAGRSTHFCPRCQK. The active-site Proton donor; for delta-elimination activity is Arg267.

This sequence belongs to the FPG family. Monomer. Zn(2+) is required as a cofactor.

It carries out the reaction Hydrolysis of DNA containing ring-opened 7-methylguanine residues, releasing 2,6-diamino-4-hydroxy-5-(N-methyl)formamidopyrimidine.. It catalyses the reaction 2'-deoxyribonucleotide-(2'-deoxyribose 5'-phosphate)-2'-deoxyribonucleotide-DNA = a 3'-end 2'-deoxyribonucleotide-(2,3-dehydro-2,3-deoxyribose 5'-phosphate)-DNA + a 5'-end 5'-phospho-2'-deoxyribonucleoside-DNA + H(+). In terms of biological role, involved in base excision repair of DNA damaged by oxidation or by mutagenic agents. Acts as a DNA glycosylase that recognizes and removes damaged bases. Has a preference for oxidized purines, such as 7,8-dihydro-8-oxoguanine (8-oxoG). Has AP (apurinic/apyrimidinic) lyase activity and introduces nicks in the DNA strand. Cleaves the DNA backbone by beta-delta elimination to generate a single-strand break at the site of the removed base with both 3'- and 5'-phosphates. The sequence is that of Formamidopyrimidine-DNA glycosylase from Heliobacterium modesticaldum (strain ATCC 51547 / Ice1).